Here is a 183-residue protein sequence, read N- to C-terminus: NADH-quinone oxidoreductase subunit B (183 aa).

The [4Fe-4S] cluster site is built by cysteine 60, cysteine 61, cysteine 125, and cysteine 154.

This sequence belongs to the complex I 20 kDa subunit family. As to quaternary structure, NDH-1 is composed of 14 different subunits. Subunits NuoB, C, D, E, F, and G constitute the peripheral sector of the complex. Requires [4Fe-4S] cluster as cofactor.

It is found in the cell inner membrane. It catalyses the reaction a quinone + NADH + 5 H(+)(in) = a quinol + NAD(+) + 4 H(+)(out). Its function is as follows. NDH-1 shuttles electrons from NADH, via FMN and iron-sulfur (Fe-S) centers, to quinones in the respiratory chain. The immediate electron acceptor for the enzyme in this species is believed to be ubiquinone. Couples the redox reaction to proton translocation (for every two electrons transferred, four hydrogen ions are translocated across the cytoplasmic membrane), and thus conserves the redox energy in a proton gradient. The chain is NADH-quinone oxidoreductase subunit B from Desulfovibrio desulfuricans (strain ATCC 27774 / DSM 6949 / MB).